The chain runs to 338 residues: Tetraacyldisaccharide 4'-kinase (338 aa).

63 to 70 is a binding site for ATP; that stretch reads TVGGAGKT.

Belongs to the LpxK family.

The enzyme catalyses a lipid A disaccharide + ATP = a lipid IVA + ADP + H(+). Its pathway is glycolipid biosynthesis; lipid IV(A) biosynthesis; lipid IV(A) from (3R)-3-hydroxytetradecanoyl-[acyl-carrier-protein] and UDP-N-acetyl-alpha-D-glucosamine: step 6/6. Transfers the gamma-phosphate of ATP to the 4'-position of a tetraacyldisaccharide 1-phosphate intermediate (termed DS-1-P) to form tetraacyldisaccharide 1,4'-bis-phosphate (lipid IVA). This chain is Tetraacyldisaccharide 4'-kinase, found in Hahella chejuensis (strain KCTC 2396).